We begin with the raw amino-acid sequence, 215 residues long: Orotate phosphoribosyltransferase (215 aa).

5-phospho-alpha-D-ribose 1-diphosphate is bound at residue Lys-26. An orotate-binding site is contributed by Phe-34–Phe-35. Residues Tyr-72–Lys-73, Arg-99, Lys-100, Lys-103, His-105, and Asp-124–Ala-132 each bind 5-phospho-alpha-D-ribose 1-diphosphate. The orotate site is built by Thr-128 and Arg-156.

Belongs to the purine/pyrimidine phosphoribosyltransferase family. PyrE subfamily. In terms of assembly, homodimer. Requires Mg(2+) as cofactor.

It catalyses the reaction orotidine 5'-phosphate + diphosphate = orotate + 5-phospho-alpha-D-ribose 1-diphosphate. Its pathway is pyrimidine metabolism; UMP biosynthesis via de novo pathway; UMP from orotate: step 1/2. In terms of biological role, catalyzes the transfer of a ribosyl phosphate group from 5-phosphoribose 1-diphosphate to orotate, leading to the formation of orotidine monophosphate (OMP). This chain is Orotate phosphoribosyltransferase, found in Hahella chejuensis (strain KCTC 2396).